Here is a 250-residue protein sequence, read N- to C-terminus: Proteasome subunit alpha type-7-B (250 aa).

K62 participates in a covalent cross-link: Glycyl lysine isopeptide (Lys-Gly) (interchain with G-Cter in ubiquitin).

The protein belongs to the peptidase T1A family. Component of the 20S core complex of the 26S proteasome. The 26S proteasome is composed of a core protease (CP), known as the 20S proteasome, capped at one or both ends by the 19S regulatory particle (RP/PA700). The 20S proteasome core is composed of 28 subunits that are arranged in four stacked rings, resulting in a barrel-shaped structure. The two end rings are each formed by seven alpha subunits, and the two central rings are each formed by seven beta subunits. The catalytic chamber with the active sites is on the inside of the barrel.

Its subcellular location is the cytoplasm. The protein localises to the nucleus. Its function is as follows. The proteasome is a multicatalytic proteinase complex which is characterized by its ability to cleave peptides with Arg, Phe, Tyr, Leu, and Glu adjacent to the leaving group at neutral or slightly basic pH. The proteasome has an ATP-dependent proteolytic activity. The protein is Proteasome subunit alpha type-7-B (PAD2) of Arabidopsis thaliana (Mouse-ear cress).